The following is an 85-amino-acid chain: UPF0335 protein BQ12070 (85 aa).

This sequence belongs to the UPF0335 family.

The protein is UPF0335 protein BQ12070 of Bartonella quintana (strain Toulouse) (Rochalimaea quintana).